The following is a 393-amino-acid chain: Meiotic driver wtf19 (393 aa).

The tract at residues Met1–Thr98 is disordered. The span at Ser11–Pro29 shows a compositional bias: basic and acidic residues. Composition is skewed to polar residues over residues Gly57–Pro72 and Ser89–Thr98. Helical transmembrane passes span Ala104–Tyr124, Trp137–Phe157, Val167–Val187, Cys208–Phe228, Glu233–Val253, Cys269–Phe289, Leu296–Leu316, and Val332–Ile352.

The protein belongs to the WTF family. Homomer. Forms protein aggregates. The two isoforms can interact with each other and with themselves. High sequence similarity is required for their interaction.

It is found in the spore membrane. The protein localises to the vacuole membrane. Its subcellular location is the ascus epiplasm. The protein resides in the cytoplasm. It localises to the endoplasmic reticulum membrane. Promotes unequal transmission of alleles from the parental zygote to progeny spores by acting as poison/antidote system where the poison and antidote proteins are produced from the same locus; the poison component is trans-acting and targets all spores within an ascus whereas the antidote component is spore-specific, leading to poisoning of all progeny that do not inherit the allele. Functionally, localizes isoform 2 to the vacuole thereby facilitating its degradation. In terms of biological role, forms toxic aggregates that disrupt spore maturation. The chain is Meiotic driver wtf19 from Schizosaccharomyces pombe (strain 972 / ATCC 24843) (Fission yeast).